The sequence spans 95 residues: MNPKHWGRAAWTIIFIVLSQAGLDGNIEACKRKLYTIVSTLPCPACRRHATIAIEDNNIMSSNDLNYIYYFFIRLFNNLASDPKYAIDVSKVKPL.

Over 1–8 (MNPKHWGR) the chain is Intravirion. Positions 1–95 (MNPKHWGRAA…AIDVSKVKPL (95 aa)) constitute an ERV/ALR sulfhydryl oxidase domain. A helical transmembrane segment spans residues 9–25 (AAWTIIFIVLSQAGLDG). The Virion surface portion of the chain corresponds to 26–95 (NIEACKRKLY…AIDVSKVKPL (70 aa)). Cys43 and Cys46 form a disulfide bridge.

Belongs to the orthopoxvirus OPG072 family. As to quaternary structure, interacts with OPG128; this interaction involves formation of a transient disulfide-bonded intermediate, allowing disulfide bond transfer. The cofactor is FAD.

The protein localises to the virion membrane. It is found in the host cytoplasm. The catalysed reaction is 2 R'C(R)SH + O2 = R'C(R)S-S(R)CR' + H2O2. Functionally, FAD-dependent sulfhydryl oxidase that catalyzes disulfide bond formation. The complete pathway for formation of disulfide bonds in intracellular virion membrane proteins sequentially involves thiol-disulfide transfer between OPG072, OPG128 and OPG088. In Variola virus (isolate Human/India/Ind3/1967) (VARV), this protein is Probable FAD-linked sulfhydryl oxidase OPG072 (OPG072).